The primary structure comprises 283 residues: Methyltransferase cpsF (283 aa).

Belongs to the methyltransferase superfamily. LaeA methyltransferase family.

The enzyme catalyses campesine A + S-adenosyl-L-methionine = campesine B + S-adenosyl-L-homocysteine + H(+). Its pathway is alkaloid biosynthesis. Functionally, methyltransferase; part of the gene cluster that mediates the biosynthesis of campesine G, a dimeric indole piperazine alkaloid that shows good insecticidal activity Galleria mellonella. Within the pathway, cpsF methylates campesine A at N13 of piperazine ring to produce campesine B. The non-canonical non-ribosomal peptide synthetase cpsA catalyzes the first steps of the pathway by producing L-tryptophanal and L-valinal from their respective amino-acids. These products condensate spontaneously to form trypyl-valyl pyrazine also known as didehydrocampesine A. The NmrA-like family domain-containing oxidoreductase cpsB is the next enzyme in cps pathway and reduces the unstable didehydrocampesine A to campesine A. The methyltransferase cpsF and the acetyltransferase cpsE both recognize N13 of piperazine ring to carry out methylation and acetylation of campesine A to produce campesine C and B, respectively. The cytochrome P450 monooxygenase cpsD then acts as a dimerase that catalyzes oxidative heterocoupling between campesine B and C to produce heterodimers with unexpected 6/5/6/6/6/6/5/6 eight-ring scaffold called campesine D. Finally,the cytochrome P450 monooxygenase cpsC is a regioselective dehydrogenase that catalyzes dehydrogenation reaction towards C2-N1 to produce campesine G. In Aspergillus campestris (strain IBT 28561), this protein is Methyltransferase cpsF.